The chain runs to 372 residues: uncharacterized protein (372 aa).

S-adenosyl-L-methionine-binding positions include aspartate 202 and 227-229 (GDF).

Belongs to the class I-like SAM-binding methyltransferase superfamily. Cation-independent O-methyltransferase family.

This is an uncharacterized protein from Methanocaldococcus jannaschii (strain ATCC 43067 / DSM 2661 / JAL-1 / JCM 10045 / NBRC 100440) (Methanococcus jannaschii).